The sequence spans 156 residues: Ribonuclease H (156 aa).

The RNase H type-1 domain occupies 1 to 142 (MGKQVEIFTD…CDELARAAAN (142 aa)). 4 residues coordinate Mg(2+): D10, E48, D70, and D134.

It belongs to the RNase H family. Monomer. Requires Mg(2+) as cofactor.

It is found in the cytoplasm. The catalysed reaction is Endonucleolytic cleavage to 5'-phosphomonoester.. Endonuclease that specifically degrades the RNA of RNA-DNA hybrids. In Photorhabdus luminescens (Xenorhabdus luminescens), this protein is Ribonuclease H.